A 249-amino-acid chain; its full sequence is MIKILVSNDDGVTAPGIKALSDALSTSYQVMTVGPDRNCSGASNSLTLTNPLRINTLSNGYVSVSGTPTDCVHLAIRELYTDEPDMVVSGINAGANLGDDTLYSGTVAAAMEGRFLGLPAIAISLVGSTLTHYETAAHFACKVIAGLLKKPIAQDQILNINVPDLPIEQVKGIRVTRLGARHKAEGMIRTQDPAGRDIFWLGPPGDEQDASDGTDFHAVTNGYVSVTPLTVDLTAFEQISTMQQWIDKI.

Residues D9, D10, S40, and N92 each coordinate a divalent metal cation.

Belongs to the SurE nucleotidase family. Requires a divalent metal cation as cofactor.

Its subcellular location is the cytoplasm. It catalyses the reaction a ribonucleoside 5'-phosphate + H2O = a ribonucleoside + phosphate. Nucleotidase that shows phosphatase activity on nucleoside 5'-monophosphates. The protein is 5'-nucleotidase SurE of Shewanella sediminis (strain HAW-EB3).